Consider the following 925-residue polypeptide: Serine/threonine-protein phosphatase 1 regulatory subunit 10 (925 aa).

The tract at residues 1–348 (MGSGPIDPKE…EPAPPSEAMD (348 aa)) is interaction with TOX4. In terms of domain architecture, TFIIS N-terminal spans 73-147 (KLLNNWLTYS…SDWMAVIRSQ (75 aa)). Positions 147-211 (QSSTQPAEKD…APSHAKFRST (65 aa)) are disordered. Composition is skewed to basic and acidic residues over residues 153-166 (AEKD…EGKS) and 174-196 (PLTE…EKPK). Residues Lys179 and Lys262 each participate in a glycyl lysine isopeptide (Lys-Gly) (interchain with G-Cter in SUMO2) cross-link. Disordered stretches follow at residues 304–398 (KIKK…KRKT), 536–555 (TLEP…SKLP), and 587–890 (SIMG…HGGD). The residue at position 313 (Ser313) is a Phosphoserine. Residues 325 to 336 (KTSTEPSTAKPS) are compositionally biased toward low complexity. The necessary for interaction with PPP1CA stretch occupies residues 357 to 433 (PPVEVPELMD…NKIKDFGEAA (77 aa)). Ser382 carries the post-translational modification Phosphoserine. The segment at 393–408 (GRKRKTVTWPEEGKLR) is necessary for interaction with PPP1CC. Positions 394-423 (RKRKTVTWPEEGKLREYFYFELDETERVNV) match the PP1-binding motif motif. A Phosphothreonine; by PKA modification is found at Thr398. Positions 418–619 (TERVNVNKIK…IKQMLVPHGL (202 aa)) are interaction with WDR82. Over residues 540-551 (GGAGGSPDGAGG) the composition is skewed to gly residues. Ser545 and Ser591 each carry phosphoserine. Basic and acidic residues predominate over residues 596–611 (PSEELLKQPDYSDKIK). The span at 644–655 (PPGPGGPMPGPH) shows a compositional bias: pro residues. Gly residues predominate over residues 656 to 665 (GGPGGPGGPV). Arg668 carries the omega-N-methylarginine modification. The span at 679–693 (GDPFWDGPGDPMRGG) shows a compositional bias: low complexity. Arg696 and Arg741 each carry omega-N-methylarginine. Composition is skewed to gly residues over residues 728 to 766 (ARGG…GMSS) and 775 to 829 (GPGG…AGGG). Basic and acidic residues-rich tracts occupy residues 846-871 (PHDV…HDGP) and 879-890 (RGHDGGHNHGGD). The segment at 891 to 919 (MSKRPVCRHFMMKGNCRYENNCAFYHPGV) adopts a C3H1-type zinc-finger fold.

As to quaternary structure, component of the PNUTS-PP1 complex (also named PTW/PP1 complex), composed of PPP1R10/PNUTS, TOX4, WDR82, and PPP1CA (or PPP1CB or PPP1CC). Post-translationally, phosphorylated on Ser-398 by PKA within the region necessary for interaction with PPP1CA.

It is found in the nucleus. It localises to the chromosome. Functionally, substrate-recognition component of the PNUTS-PP1 protein phosphatase complex, a protein phosphatase 1 (PP1) complex that promotes RNA polymerase II transcription pause-release, allowing transcription elongation. Promoter-proximal pausing by RNA polymerase II is a transcription halt following transcription initiation but prior to elongation, which acts as a checkpoint to control that transcripts are favorably configured for transcriptional elongation. The PNUTS-PP1 complex mediates the release of RNA polymerase II from promoter-proximal region of genes by catalyzing dephosphorylation of proteins involved in transcription, such as AFF4, CDK9, MEPCE, INTS12, NCBP1, POLR2M/GDOWN1 and SUPT6H. The PNUTS-PP1 complex also regulates RNA polymerase II transcription termination by mediating dephosphorylation of SUPT5H in termination zones downstream of poly(A) sites, thereby promoting deceleration of RNA polymerase II transcription. PNUTS-PP1 complex is also involved in the response to replication stress by mediating dephosphorylation of POLR2A at 'Ser-5' of the CTD, promoting RNA polymerase II degradation. The PNUTS-PP1 complex also plays a role in the control of chromatin structure and cell cycle progression during the transition from mitosis into interphase. PNUTS-PP1 complex mediates dephosphorylation of MYC, promoting MYC stability by preventing MYC ubiquitination by the SCF(FBXW7) complex. In addition to acts as a substrate-recognition component, PPP1R10/PNUTS also acts as a nuclear targeting subunit for the PNUTS-PP1 complex. In some context, PPP1R10/PNUTS also acts as an inhibitor of protein phosphatase 1 (PP1) activity by preventing access to substrates, such as RB. In Sus scrofa (Pig), this protein is Serine/threonine-protein phosphatase 1 regulatory subunit 10 (PPP1R10).